We begin with the raw amino-acid sequence, 263 residues long: Shikimate dehydrogenase (NADP(+)) (263 aa).

Shikimate contacts are provided by residues 16-18 (SKS) and Thr65. Residue Lys69 is the Proton acceptor of the active site. 2 residues coordinate shikimate: Asn90 and Asp105. NADP(+) contacts are provided by residues 125–129 (GSGGS) and Leu208. Position 210 (Tyr210) interacts with shikimate. Gly230 contacts NADP(+).

Belongs to the shikimate dehydrogenase family. In terms of assembly, homodimer.

It catalyses the reaction shikimate + NADP(+) = 3-dehydroshikimate + NADPH + H(+). The protein operates within metabolic intermediate biosynthesis; chorismate biosynthesis; chorismate from D-erythrose 4-phosphate and phosphoenolpyruvate: step 4/7. Its activity is regulated as follows. Inhibited by curcumin, 3-(2-naphthyloxy)-4-oxo-2-(trifluoromethyl)-4H-chromen-7-yl 3-chlorobenzoate, butyl 2-{[3-(2-naphthyloxy)-4-oxo-2-(trifluoromethyl)-4H-chromen-7-yl]oxy}propanoate, 2-({2-[(2-{[2-(2,3-dimethylanilino)-2-oxoethyl]sulfanyl}-1,3-benzothiazol-6-yl)amino]-2-oxoethyl}sulfanyl)-N-(2-naphthyl)acetamide, and maesaquinone diacetate. Functionally, involved in the biosynthesis of the chorismate, which leads to the biosynthesis of aromatic amino acids. Catalyzes the reversible NADPH linked reduction of 3-dehydroshikimate (DHSA) to yield shikimate (SA). It can also use NAD to oxidize shikimate. This Helicobacter pylori (Campylobacter pylori) protein is Shikimate dehydrogenase (NADP(+)).